We begin with the raw amino-acid sequence, 287 residues long: Elongation factor Ts (287 aa).

The interval 80-83 (TDFL) is involved in Mg(2+) ion dislocation from EF-Tu.

The protein belongs to the EF-Ts family.

It is found in the cytoplasm. In terms of biological role, associates with the EF-Tu.GDP complex and induces the exchange of GDP to GTP. It remains bound to the aminoacyl-tRNA.EF-Tu.GTP complex up to the GTP hydrolysis stage on the ribosome. The sequence is that of Elongation factor Ts from Pseudomonas putida (strain ATCC 47054 / DSM 6125 / CFBP 8728 / NCIMB 11950 / KT2440).